Here is a 98-residue protein sequence, read N- to C-terminus: Small ribosomal subunit protein eS24 (98 aa).

The disordered stretch occupies residues 76-98 (GRQRTERSYLLNRGEPKKEEEEA). Residues 89-98 (GEPKKEEEEA) show a composition bias toward basic and acidic residues.

The protein belongs to the eukaryotic ribosomal protein eS24 family.

In Methanosphaerula palustris (strain ATCC BAA-1556 / DSM 19958 / E1-9c), this protein is Small ribosomal subunit protein eS24.